The chain runs to 102 residues: Nucleoid-associated protein BCc_301 (102 aa).

It belongs to the YbaB/EbfC family. As to quaternary structure, homodimer.

The protein resides in the cytoplasm. Its subcellular location is the nucleoid. In terms of biological role, binds to DNA and alters its conformation. May be involved in regulation of gene expression, nucleoid organization and DNA protection. The chain is Nucleoid-associated protein BCc_301 from Buchnera aphidicola subsp. Cinara cedri (strain Cc).